A 299-amino-acid chain; its full sequence is Virginiamycin B lyase (299 aa).

His-229 lines the substrate pocket. Position 269 (Glu-269) interacts with Mg(2+). His-271 (proton acceptor) is an active-site residue. Residue Glu-286 participates in Mg(2+) binding.

This sequence belongs to the Vgb family. Monomer. Requires Mg(2+) as cofactor.

Functionally, inactivates the type B streptogramin antibiotics by linearizing the lactone ring at the ester linkage, generating a free phenylglycine carboxylate and converting the threonyl moiety into 2-amino-butenoic acid. This chain is Virginiamycin B lyase (vgb), found in Bordetella pertussis (strain Tohama I / ATCC BAA-589 / NCTC 13251).